Reading from the N-terminus, the 147-residue chain is MVHFTAEEKAAVTSLWSKMNVEEAGGEALGRLLVVYPWTQRFFDSFGNLSSPSAILGNPKVKAHGKKVLTSFGDAIKNMDNLKPAFAKLSELHCDKLHVDPENFKLLGNVMVIILATHFGKEFTPEVQAAWQKLVSAVAIALAHKYH.

The 145-residue stretch at 3–147 folds into the Globin domain; it reads HFTAEEKAAV…VAIALAHKYH (145 aa). Phosphoserine occurs at positions 14 and 51. Heme b contacts are provided by His64 and His93.

This sequence belongs to the globin family. Heterotetramer of two alpha chains and two epsilon chains in early embryonic hemoglobin Gower-2; two zeta chains and two epsilon chains in early embryonic hemoglobin Gower-1. In terms of tissue distribution, red blood cells.

The epsilon chain is a beta-type chain of early mammalian embryonic hemoglobin. In Pan troglodytes (Chimpanzee), this protein is Hemoglobin subunit epsilon (HBE1).